Reading from the N-terminus, the 219-residue chain is Transmembrane protein 17B (219 aa).

A glycan (N-linked (GlcNAc...) asparagine) is linked at Asn26. The next 4 helical transmembrane spans lie at 51–71, 84–104, 116–136, and 147–167; these read MMLY…IITM, ILLT…LYIG, LAGF…FLLT, and LAVH…SFLV. N-linked (GlcNAc...) asparagine glycans are attached at residues Asn195 and Asn203.

This sequence belongs to the TMEM17 family. Part of the tectonic-like complex (also named B9 complex).

The protein localises to the cell projection. Its subcellular location is the cilium membrane. In terms of biological role, transmembrane component of the tectonic-like complex, a complex localized at the transition zone of primary cilia and acting as a barrier that prevents diffusion of transmembrane proteins between the cilia and plasma membranes. Required for ciliogenesis and sonic hedgehog/SHH signaling. The polypeptide is Transmembrane protein 17B (Tmem17-b) (Xenopus tropicalis (Western clawed frog)).